The primary structure comprises 372 residues: MHNQAPIQRRKSTRIYVGNVPIGDGAPIAVQSMTNTRTTDVEATVNQIKALERVGADIVRVSVPTMDAAEAFKLIKQQVSVPLVADIHFDYRIALKVAEYGVDCLRINPGNIGNEERIRMVVDCARDKNIPIRIGVNAGSLEKDLQEKYGEPTPQALLESAMRHVDHLDRLNFDQFKVSVKASDVFLAVESYRLLAKQIDQPLHLGITEAGGARSGAVKSAIGLGLLLSEGIGDTLRVSLAADPVEEIKVGFDILKSLRIRARGINFIACPTCSRQEFDVIGTVNALEQRLEDIITPMDVSIIGCVVNGPGEALVSTLGVTGGNKKSGLYEDGVRKDRLDNDDMIAQLESRIRAKVSQLDEARRIDVLQVEK.

[4Fe-4S] cluster-binding residues include Cys270, Cys273, Cys305, and Glu312.

The protein belongs to the IspG family. [4Fe-4S] cluster serves as cofactor.

The catalysed reaction is (2E)-4-hydroxy-3-methylbut-2-enyl diphosphate + oxidized [flavodoxin] + H2O + 2 H(+) = 2-C-methyl-D-erythritol 2,4-cyclic diphosphate + reduced [flavodoxin]. It functions in the pathway isoprenoid biosynthesis; isopentenyl diphosphate biosynthesis via DXP pathway; isopentenyl diphosphate from 1-deoxy-D-xylulose 5-phosphate: step 5/6. Functionally, converts 2C-methyl-D-erythritol 2,4-cyclodiphosphate (ME-2,4cPP) into 1-hydroxy-2-methyl-2-(E)-butenyl 4-diphosphate. This is 4-hydroxy-3-methylbut-2-en-1-yl diphosphate synthase (flavodoxin) from Salmonella typhi.